The following is a 395-amino-acid chain: L-rhamnonate dehydratase (395 aa).

Residues His-23 and Arg-49 each coordinate substrate. 3 residues coordinate Mg(2+): Asp-215, Glu-241, and Glu-269. His-319 acts as the Proton acceptor in catalysis. Substrate is bound at residue Glu-339.

Belongs to the mandelate racemase/muconate lactonizing enzyme family. RhamD subfamily. Homooctamer; tetramer of dimers. Requires Mg(2+) as cofactor.

It carries out the reaction L-rhamnonate = 2-dehydro-3-deoxy-L-rhamnonate + H2O. Catalyzes the dehydration of L-rhamnonate to 2-keto-3-deoxy-L-rhamnonate (KDR). In Delftia acidovorans (strain DSM 14801 / SPH-1), this protein is L-rhamnonate dehydratase.